We begin with the raw amino-acid sequence, 134 residues long: Putative pre-16S rRNA nuclease (134 aa).

The protein belongs to the YqgF nuclease family.

It is found in the cytoplasm. In terms of biological role, could be a nuclease involved in processing of the 5'-end of pre-16S rRNA. The chain is Putative pre-16S rRNA nuclease from Helicobacter pylori (strain G27).